A 210-amino-acid chain; its full sequence is Redox-sensing transcriptional repressor Rex (210 aa).

The H-T-H motif DNA-binding region spans 17–56; that stretch reads KYHRYLNELMKNDVDRISSKELGEKIGFTASQIRQDLNCF. 91 to 96 lines the NAD(+) pocket; sequence GAGNIG.

It belongs to the transcriptional regulatory Rex family. Homodimer.

It localises to the cytoplasm. Functionally, modulates transcription in response to changes in cellular NADH/NAD(+) redox state. The chain is Redox-sensing transcriptional repressor Rex from Clostridium botulinum (strain Alaska E43 / Type E3).